A 283-amino-acid chain; its full sequence is Phosphatidylglycerol--prolipoprotein diacylglyceryl transferase (283 aa).

Transmembrane regions (helical) follow at residues 17 to 37 (LAVRWYALSYILGFILFTFLG), 56 to 76 (FLTWGILGVILGGRLGYVLFY), and 92 to 112 (WEGGMSFHGGFLGVVIAIWLF). Position 139 (R139) interacts with a 1,2-diacyl-sn-glycero-3-phospho-(1'-sn-glycerol). The next 2 helical transmembrane spans lie at 222–242 (GQTAALFLGGYGVFRFIAEFA) and 255–275 (GLSMGQWLSVPMIVLGIVGFV).

The protein belongs to the Lgt family.

It localises to the cell inner membrane. The enzyme catalyses L-cysteinyl-[prolipoprotein] + a 1,2-diacyl-sn-glycero-3-phospho-(1'-sn-glycerol) = an S-1,2-diacyl-sn-glyceryl-L-cysteinyl-[prolipoprotein] + sn-glycerol 1-phosphate + H(+). The protein operates within protein modification; lipoprotein biosynthesis (diacylglyceryl transfer). Its function is as follows. Catalyzes the transfer of the diacylglyceryl group from phosphatidylglycerol to the sulfhydryl group of the N-terminal cysteine of a prolipoprotein, the first step in the formation of mature lipoproteins. The protein is Phosphatidylglycerol--prolipoprotein diacylglyceryl transferase of Neisseria gonorrhoeae (strain ATCC 700825 / FA 1090).